The chain runs to 117 residues: Large ribosomal subunit protein bL31B (117 aa).

Positions 75 to 117 (KRFERKKEASPADTPPESDSTTENASVEKKAEKKRVTAKGSKK) are disordered. Basic and acidic residues predominate over residues 100 to 109 (SVEKKAEKKR).

Belongs to the bacterial ribosomal protein bL31 family. Type B subfamily. As to quaternary structure, part of the 50S ribosomal subunit.

The polypeptide is Large ribosomal subunit protein bL31B (Protochlamydia amoebophila (strain UWE25)).